The chain runs to 84 residues: Toxin Cex12 (84 aa).

Residues 1–19 form the signal peptide; it reads MNSLLMITTCLILVGTVWA. The 64-residue stretch at 20–83 folds into the LCN-type CS-alpha/beta domain; it reads NDGYLFDKRK…ISRTPGKTCR (64 aa). Disulfide bonds link Cys31–Cys82, Cys35–Cys58, Cys44–Cys63, and Cys48–Cys65.

The protein belongs to the long (4 C-C) scorpion toxin superfamily. Sodium channel inhibitor family. Beta subfamily. Expressed by the venom gland.

The protein localises to the secreted. Beta toxins bind voltage-independently at site-4 of sodium channels (Nav) and shift the voltage of activation toward more negative potentials thereby affecting sodium channel activation and promoting spontaneous and repetitive firing. This Centruroides exilicauda (Bark scorpion) protein is Toxin Cex12.